The sequence spans 517 residues: GMP synthase [glutamine-hydrolyzing] (517 aa).

The region spanning 11–202 is the Glutamine amidotransferase type-1 domain; that stretch reads KIIVLDFGSQ…AFNVCDAKAN (192 aa). The active-site Nucleophile is the cysteine 88. Catalysis depends on residues histidine 176 and glutamate 178. Positions 203 to 392 constitute a GMPS ATP-PPase domain; the sequence is WTMDDFIEMQ…LGIPHDLVWR (190 aa). 230–236 contributes to the ATP binding site; sequence SGGVDSS.

As to quaternary structure, homodimer.

It carries out the reaction XMP + L-glutamine + ATP + H2O = GMP + L-glutamate + AMP + diphosphate + 2 H(+). It functions in the pathway purine metabolism; GMP biosynthesis; GMP from XMP (L-Gln route): step 1/1. Functionally, catalyzes the synthesis of GMP from XMP. This is GMP synthase [glutamine-hydrolyzing] from Lactobacillus gasseri (strain ATCC 33323 / DSM 20243 / BCRC 14619 / CIP 102991 / JCM 1131 / KCTC 3163 / NCIMB 11718 / NCTC 13722 / AM63).